Consider the following 321-residue polypeptide: Porphobilinogen deaminase (321 aa).

S-(dipyrrolylmethanemethyl)cysteine is present on cysteine 243.

It belongs to the HMBS family. In terms of assembly, monomer. Dipyrromethane is required as a cofactor.

The catalysed reaction is 4 porphobilinogen + H2O = hydroxymethylbilane + 4 NH4(+). It participates in porphyrin-containing compound metabolism; protoporphyrin-IX biosynthesis; coproporphyrinogen-III from 5-aminolevulinate: step 2/4. Its function is as follows. Tetrapolymerization of the monopyrrole PBG into the hydroxymethylbilane pre-uroporphyrinogen in several discrete steps. In Histophilus somni (strain 129Pt) (Haemophilus somnus), this protein is Porphobilinogen deaminase.